A 612-amino-acid polypeptide reads, in one-letter code: Proton pump-interactor 1 (612 aa).

Residues 1-58 (MGVEVVNSGGFEVAPAPFEGKPEKNGKLDQGKGDDAPINFGSVGELPKNAEENNNKVV) form a disordered region. The span at 20-35 (GKPEKNGKLDQGKGDD) shows a compositional bias: basic and acidic residues. 2 coiled-coil regions span residues 90–113 (PKIKAKLDLADKELEKLNKARTGV) and 251–314 (LDGV…NSEY). 4 stretches are compositionally biased toward basic and acidic residues: residues 374-387 (LSRDGRMRNPDEKP), 434-446 (EKAKDAVKVKNVA), 459-498 (PQKEEKPVDAATAKEMRKQEEIAKAKQAMERKKKLAEKAA), and 505-519 (AQKEAEKKEKKEQEK). Residues 374–572 (LSRDGRMRNP…PIRNRTRGRG (199 aa)) form a disordered region. Positions 466 to 526 (VDAATAKEMR…QEKKAKKKTG (61 aa)) form a coiled coil. Residues 531–545 (TETEEVPEASEEEIE) show a composition bias toward acidic residues. At S540 the chain carries Phosphoserine. Positions 549–564 (QEEKPQKEKVFKEKPI) are enriched in basic and acidic residues. The helical transmembrane segment at 591–611 (VYAAPAALVVLLLLVLGYYYV) threads the bilayer.

This sequence belongs to the plant Proton pump-interactor protein family. As to quaternary structure, interacts with AHA1 via N-terminal region. In terms of tissue distribution, strongly expressed in root and shoot vascular systems, particularly in meristematic and sink tissues. Also present in pollen, stigmas and siliques, but not in developing embryos.

The protein localises to the cell membrane. It localises to the endoplasmic reticulum membrane. Promotes AHA1 plasma membrane ATPase activity by binding to a site different from the 14-3-3 binding site. In Arabidopsis thaliana (Mouse-ear cress), this protein is Proton pump-interactor 1 (PPI1).